We begin with the raw amino-acid sequence, 117 residues long: Cytochrome c6 (117 aa).

The first 24 residues, 1-24 (MKKLLAIALTVLATVFAFGTPAFA), serve as a signal peptide directing secretion. Residues Cys38, Cys41, His42, and Met89 each coordinate heme c.

Belongs to the cytochrome c family. PetJ subfamily. As to quaternary structure, monomer. Binds 1 heme c group covalently per subunit.

It localises to the cellular thylakoid lumen. In terms of biological role, functions as an electron carrier between membrane-bound cytochrome b6-f and photosystem I in oxygenic photosynthesis. This is Cytochrome c6 (petJ) from Picosynechococcus sp. (strain ATCC 27264 / PCC 7002 / PR-6) (Agmenellum quadruplicatum).